Consider the following 1345-residue polypeptide: DNA-directed RNA polymerase subunit beta (1345 aa).

It belongs to the RNA polymerase beta chain family. In terms of assembly, the RNAP catalytic core consists of 2 alpha, 1 beta, 1 beta' and 1 omega subunit. When a sigma factor is associated with the core the holoenzyme is formed, which can initiate transcription.

It carries out the reaction RNA(n) + a ribonucleoside 5'-triphosphate = RNA(n+1) + diphosphate. DNA-dependent RNA polymerase catalyzes the transcription of DNA into RNA using the four ribonucleoside triphosphates as substrates. In Shewanella sp. (strain MR-4), this protein is DNA-directed RNA polymerase subunit beta.